We begin with the raw amino-acid sequence, 464 residues long: Heterogeneous nuclear ribonucleoprotein K (464 aa).

M1 is modified (N-acetylmethionine). The interval 1–37 (METEQPEETFPNTETNGEFGKRPAEDMEEEQAFKRSR) is disordered. Residues 1-276 (METEQPEETF…GRGGRPMPPS (276 aa)) are necessary for interaction with DDX1. Over residues 19–37 (FGKRPAEDMEEEQAFKRSR) the composition is skewed to basic and acidic residues. K34 carries the post-translational modification N6-acetyllysine; alternate. K34 is covalently cross-linked (Glycyl lysine isopeptide (Lys-Gly) (interchain with G-Cter in SUMO1); alternate). Residue K34 forms a Glycyl lysine isopeptide (Lys-Gly) (interchain with G-Cter in SUMO2); alternate linkage. S36 is subject to Phosphoserine. Phosphothreonine is present on T39. One can recognise a KH 1 domain in the interval 42-104 (MVELRILLQS…ETIGEILKKI (63 aa)). Glycyl lysine isopeptide (Lys-Gly) (interchain with G-Cter in SUMO2) cross-links involve residues K52 and K60. Repeat copies occupy residues 54–76 (AGAVIGKGGKNIKALRTDYNASV) and 59–62 (GKGG). The segment at 54–421 (AGAVIGKGGK…QIRHESGASI (368 aa)) is 2 X 22 AA approximate repeats. The 5 X 4 AA repeats of G-X-G-G stretch occupies residues 59-407 (GKGGKNIKAL…LAGSIIGKGG (349 aa)). Phosphoserine occurs at positions 75 and 116. In terms of domain architecture, KH 2 spans 144–209 (DCELRLLIHQ…DRVVECIKII (66 aa)). K163 participates in a covalent cross-link: Glycyl lysine isopeptide (Lys-Gly) (interchain with G-Cter in SUMO1); alternate. Residue K163 forms a Glycyl lysine isopeptide (Lys-Gly) (interchain with G-Cter in SUMO2); alternate linkage. K198 carries the N6-acetyllysine modification. 2 positions are modified to phosphoserine: S214 and S216. Residue K219 forms a Glycyl lysine isopeptide (Lys-Gly) (interchain with G-Cter in SUMO2); alternate linkage. At K219 the chain carries N6-succinyllysine; alternate. The interval 236-273 (YGGFTMMFDDRRGRPVGFPMRGRGGFDRMPPGRGGRPM) is RNA-binding RGG-box. 3 tandem repeats follow at residues 245–250 (DRRGRP), 257–260 (GRGG), and 267–270 (GRGG). The interval 245-329 (DRRGRPVGFP…LMAYDRRGRP (85 aa)) is 2 X 6 AA approximate repeats. The interval 250–329 (PVGFPMRGRG…LMAYDRRGRP (80 aa)) is disordered. The segment covering 252–266 (GFPMRGRGGFDRMPP) has biased composition (low complexity). The segment covering 276 to 285 (SRRDYDDMSP) has biased composition (basic and acidic residues). Phosphoserine is present on S284. Residues 295-298 (GRGG) form a 3-4 repeat. The residue at position 316 (R316) is an Omega-N-methylarginine. A 2-2 repeat occupies 324-329 (DRRGRP). At R377 the chain carries Omega-N-methylarginine. S379 carries the phosphoserine modification. The residue at position 380 (Y380) is a Phosphotyrosine. The region spanning 387–451 (IITTQVTIPK…DQIQNAQYLL (65 aa)) is the KH 3 domain. Repeat copies occupy residues 399 to 421 (AGSIIGKGGQRIKQIRHESGASI) and 404 to 407 (GKGG). Residue K405 is modified to N6-acetyllysine; alternate. Residue K405 forms a Glycyl lysine isopeptide (Lys-Gly) (interchain with G-Cter in SUMO2); alternate linkage. S420 is modified (phosphoserine). K422 is covalently cross-linked (Glycyl lysine isopeptide (Lys-Gly) (interchain with G-Cter in SUMO1); alternate). K422 participates in a covalent cross-link: Glycyl lysine isopeptide (Lys-Gly) (interchain with G-Cter in SUMO2); alternate. K422 participates in a covalent cross-link: Glycyl lysine isopeptide (Lys-Gly) (interchain with G-Cter in SUMO); alternate.

Identified in the spliceosome C complex. Interacts with ANKRD28, RBM42 and ZIK1. Interacts with DDX1. Interacts with MDM2; this interaction leads to ubiquitination and proteasomal degradation. Interacts with p53/TP53. Interacts with BRDT. Interacts with IVNS1ABP. Interacts with PPIA/CYPA. Part of a transcription inhibitory ribonucleoprotein complex composed at least of the circular RNA circZNF827, ZNF827 and HNRNPL. Post-translationally, sumoylated by CBX4. Sumoylation is increased upon DNA damage, such as that produced by doxorubicin, etoposide, UV light and camptothecin, due to enhanced CBX4 phosphorylation by HIPK2 under these conditions. In terms of processing, ubiquitinated by MDM2. Doxorubicin treatment does not affect monoubiquitination, but slightly decreases HNRNPK poly-ubiquitination. O-glycosylated (O-GlcNAcylated), in a cell cycle-dependent manner.

It is found in the cytoplasm. The protein resides in the nucleus. The protein localises to the nucleoplasm. It localises to the cell projection. Its subcellular location is the podosome. In terms of biological role, one of the major pre-mRNA-binding proteins. Binds tenaciously to poly(C) sequences. Likely to play a role in the nuclear metabolism of hnRNAs, particularly for pre-mRNAs that contain cytidine-rich sequences. Can also bind poly(C) single-stranded DNA. Plays an important role in p53/TP53 response to DNA damage, acting at the level of both transcription activation and repression. When sumoylated, acts as a transcriptional coactivator of p53/TP53, playing a role in p21/CDKN1A and 14-3-3 sigma/SFN induction. As far as transcription repression is concerned, acts by interacting with long intergenic RNA p21 (lincRNA-p21), a non-coding RNA induced by p53/TP53. This interaction is necessary for the induction of apoptosis, but not cell cycle arrest. As part of a ribonucleoprotein complex composed at least of ZNF827, HNRNPL and the circular RNA circZNF827 that nucleates the complex on chromatin, may negatively regulate the transcription of genes involved in neuronal differentiation. The protein is Heterogeneous nuclear ribonucleoprotein K (HNRNPK) of Macaca fascicularis (Crab-eating macaque).